The chain runs to 357 residues: 4-hydroxyphenylpyruvate dioxygenase (357 aa).

2 VOC domains span residues 12-129 (GFEF…LIDR) and 158-313 (IIDH…IFSE). Fe cation is bound by residues His161, His240, and Glu322.

It belongs to the 4HPPD family. In terms of assembly, homotetramer. Fe cation is required as a cofactor.

It carries out the reaction 3-(4-hydroxyphenyl)pyruvate + O2 = homogentisate + CO2. It functions in the pathway amino-acid degradation; L-phenylalanine degradation; acetoacetate and fumarate from L-phenylalanine: step 3/6. In Pseudomonas sp. (strain P.J. 874), this protein is 4-hydroxyphenylpyruvate dioxygenase (hpd).